Reading from the N-terminus, the 412-residue chain is Serine hydroxymethyltransferase (412 aa).

(6S)-5,6,7,8-tetrahydrofolate contacts are provided by residues L117 and 121 to 123 (GHL). K226 bears the N6-(pyridoxal phosphate)lysine mark.

Belongs to the SHMT family. Homodimer. Pyridoxal 5'-phosphate is required as a cofactor.

It is found in the cytoplasm. The catalysed reaction is (6R)-5,10-methylene-5,6,7,8-tetrahydrofolate + glycine + H2O = (6S)-5,6,7,8-tetrahydrofolate + L-serine. Its pathway is one-carbon metabolism; tetrahydrofolate interconversion. The protein operates within amino-acid biosynthesis; glycine biosynthesis; glycine from L-serine: step 1/1. In terms of biological role, catalyzes the reversible interconversion of serine and glycine with tetrahydrofolate (THF) serving as the one-carbon carrier. This reaction serves as the major source of one-carbon groups required for the biosynthesis of purines, thymidylate, methionine, and other important biomolecules. Also exhibits THF-independent aldolase activity toward beta-hydroxyamino acids, producing glycine and aldehydes, via a retro-aldol mechanism. The protein is Serine hydroxymethyltransferase of Staphylococcus aureus (strain USA300).